The following is a 265-amino-acid chain: uncharacterized protein (265 aa).

Disordered stretches follow at residues 162–183 and 196–239; these read VTKK…NNDQ and AKTN…DKEI. Composition is skewed to polar residues over residues 165 to 183 and 213 to 233; these read KNAS…NNDQ and QSTS…GNAS.

It belongs to the MG185/MG260 family.

This is an uncharacterized protein from Mycoplasma pneumoniae (strain ATCC 29342 / M129 / Subtype 1) (Mycoplasmoides pneumoniae).